We begin with the raw amino-acid sequence, 151 residues long: Protein SprT-like (151 aa).

In terms of domain architecture, SprT-like spans 6–147 (LQRMVENLSE…GHCNGKLRMK (142 aa)). His67 contacts Zn(2+). Glu68 is an active-site residue. Residue His71 participates in Zn(2+) binding.

This sequence belongs to the SprT family. Zn(2+) serves as cofactor.

It is found in the cytoplasm. This chain is Protein SprT-like, found in Staphylococcus aureus (strain MRSA252).